Here is a 309-residue protein sequence, read N- to C-terminus: Phytoene synthase (309 aa).

It belongs to the phytoene/squalene synthase family. ATP is required as a cofactor. It depends on Mn(2+) as a cofactor. Mg(2+) serves as cofactor.

The protein operates within carotenoid biosynthesis; phytoene biosynthesis. Functionally, involved in the biosynthesis of carotenoids. Catalyzes the condensation of two molecules of geranylgeranyl diphosphate (GGPP) to give prephytoene diphosphate (PPPP) and the subsequent rearrangement of the cyclopropylcarbinyl intermediate to yield phytoene. This Pseudescherichia vulneris (Escherichia vulneris) protein is Phytoene synthase (crtB).